Here is a 113-residue protein sequence, read N- to C-terminus: C-X-C motif chemokine 6 (113 aa).

Residues Met-1–Ala-36 form the signal peptide. Cystine bridges form between Cys-48–Cys-74 and Cys-50–Cys-90.

Belongs to the intercrine alpha (chemokine CxC) family.

It localises to the secreted. Its function is as follows. Chemotactic for neutrophil granulocytes. Signals through binding and activation of its receptors (CXCR1 and CXCR2). In addition to its chemotactic and angiogenic properties, it has strong antibacterial activity against Gram-positive and Gram-negative bacteria (90-fold-higher when compared to CXCL5 and CXCL7). This Equus caballus (Horse) protein is C-X-C motif chemokine 6 (CXCL6).